The chain runs to 488 residues: GTPase Der (488 aa).

2 EngA-type G domains span residues 3-166 and 199-372; these read PVVA…AEAM and IKLA…DSAT. GTP contacts are provided by residues 9 to 16, 56 to 60, 118 to 121, 205 to 212, 252 to 256, and 317 to 320; these read GRPNVGKS, DTGGI, NKVD, GKPNVGKS, DTAGV, and NKWD. Positions 373–457 constitute a KH-like domain; that stretch reads RRVSTSMLTR…PIQLRFQEGD (85 aa). The interval 460 to 488 is disordered; that stretch reads FENKTEKLTMSQERRRKRAQSHIKDRKTK. The segment covering 473–488 has biased composition (basic residues); it reads RRRKRAQSHIKDRKTK.

This sequence belongs to the TRAFAC class TrmE-Era-EngA-EngB-Septin-like GTPase superfamily. EngA (Der) GTPase family. Associates with the 50S ribosomal subunit.

GTPase that plays an essential role in the late steps of ribosome biogenesis. The chain is GTPase Der from Shewanella baltica (strain OS155 / ATCC BAA-1091).